We begin with the raw amino-acid sequence, 416 residues long: Tyrosine aminotransferase (416 aa).

Lys253 is modified (N6-(pyridoxal phosphate)lysine).

Belongs to the class-I pyridoxal-phosphate-dependent aminotransferase family. As to quaternary structure, homodimer. Requires pyridoxal 5'-phosphate as cofactor. In terms of processing, the N-terminus is blocked.

The protein localises to the cytoplasm. It is found in the mitochondrion. The enzyme catalyses L-tyrosine + 2-oxoglutarate = 3-(4-hydroxyphenyl)pyruvate + L-glutamate. Its pathway is amino-acid degradation; L-phenylalanine degradation; acetoacetate and fumarate from L-phenylalanine: step 2/6. Functionally, transaminase involved in tyrosine breakdown. Converts tyrosine to p-hydroxyphenylpyruvate. This chain is Tyrosine aminotransferase, found in Trypanosoma cruzi.